The sequence spans 145 residues: Snaclec salmorin subunit B (145 aa).

The N-terminal stretch at 1–23 (MGRFIFVSFGLLVVFVSLSGTGA) is a signal peptide. 3 disulfides stabilise this stretch: Cys25–Cys36, Cys53–Cys141, and Cys118–Cys133. In terms of domain architecture, C-type lectin spans 32-142 (YEGHCYKLFN…CRMEAYFVCE (111 aa)). 2 residues coordinate Ca(2+): Ser64 and Glu70. Residue Glu142 participates in Ca(2+) binding.

Belongs to the snaclec family. Heterodimer of subunits A and B; disulfide-linked. In terms of tissue distribution, expressed by the venom gland.

The protein resides in the secreted. Functionally, inhibits thrombin-induced fibrinogen clotting and factor Xa-induced prothrombin activation. Binds to thrombin and prothrombin exosites. The sequence is that of Snaclec salmorin subunit B from Gloydius brevicauda (Korean slamosa snake).